The sequence spans 203 residues: MEVLLGITGKDFTIIAASKAAMRGATILKASDDKTRSLNKHTLMAFSGEAGDTVQFAEYTQANAQLYSMRNGTDLSPSALANFVRGELATSLRSRKPYNVNLLLGGVDPITHKPSLYWLDYLASLAKVPYAAHGYAQYYCLSILDKHHHPDITLHQGIKLLNLCTDELKRRLPIDFKGMTVKAVTKDGIIDIEFDDDKVVKMA.

This sequence belongs to the peptidase T1B family. As to quaternary structure, the 26S proteasome consists of a 20S proteasome core and two 19S regulatory subunits. The 20S proteasome core is composed of 28 subunits that are arranged in four stacked rings, resulting in a barrel-shaped structure. The two end rings are each formed by seven alpha subunits, and the two central rings are each formed by seven beta subunits. The catalytic chamber with the active sites is on the inside of the barrel.

The protein resides in the cytoplasm. It is found in the nucleus. In terms of biological role, non-catalytic component of the proteasome, a multicatalytic proteinase complex which is characterized by its ability to cleave peptides with Arg, Phe, Tyr, Leu, and Glu adjacent to the leaving group at neutral or slightly basic pH. The proteasome has an ATP-dependent proteolytic activity. In Neurospora crassa (strain ATCC 24698 / 74-OR23-1A / CBS 708.71 / DSM 1257 / FGSC 987), this protein is Probable proteasome subunit beta type-4 (pcb-4).